Consider the following 436-residue polypeptide: Chromosomal replication initiator protein DnaA (436 aa).

The interval 1 to 69 (MLADEVLELL…AHLFEVKTGT (69 aa)) is domain I, interacts with DnaA modulators. Residues 69–99 (TKPNVEITTQTKLKSSKQNQVNIKQIKAQST) are domain II. A domain III, AAA+ region region spans residues 100-314 (LLNPAYTFEN…SAIINLNAYA (215 aa)). Residues glycine 144, glycine 146, lysine 147, and threonine 148 each contribute to the ATP site. Positions 315–436 (NLMRQEITLD…ELKNKILTKG (122 aa)) are domain IV, binds dsDNA.

This sequence belongs to the DnaA family. As to quaternary structure, oligomerizes as a right-handed, spiral filament on DNA at oriC.

Its subcellular location is the cytoplasm. Its function is as follows. Plays an essential role in the initiation and regulation of chromosomal replication. ATP-DnaA binds to the origin of replication (oriC) to initiate formation of the DNA replication initiation complex once per cell cycle. Binds the DnaA box (a 9 base pair repeat at the origin) and separates the double-stranded (ds)DNA. Forms a right-handed helical filament on oriC DNA; dsDNA binds to the exterior of the filament while single-stranded (ss)DNA is stabiized in the filament's interior. The ATP-DnaA-oriC complex binds and stabilizes one strand of the AT-rich DNA unwinding element (DUE), permitting loading of DNA polymerase. After initiation quickly degrades to an ADP-DnaA complex that is not apt for DNA replication. Binds acidic phospholipids. This Campylobacter curvus (strain 525.92) protein is Chromosomal replication initiator protein DnaA.